A 39-amino-acid chain; its full sequence is U1-nemetoxin-Csp1c (39 aa).

4 cysteine pairs are disulfide-bonded: Cys1/Cys15, Cys8/Cys19, Cys14/Cys36, and Cys25/Cys32.

Expressed by the venom gland.

The protein resides in the secreted. In terms of biological role, causes paralysis to insect larvae (H.virescens). This toxin is active only on insects. The protein is U1-nemetoxin-Csp1c of Calisoga sp. (Spider).